A 156-amino-acid polypeptide reads, in one-letter code: Ribonuclease pancreatic (156 aa).

The signal sequence occupies residues 1 to 28 (MALEKSLALLPLLVLVLLVLGWVQPSLG). The span at 33 to 43 (AKKFQRQHMDS) shows a compositional bias: basic and acidic residues. Residues 33–52 (AKKFQRQHMDSDGSPSSNPT) are disordered. Substrate-binding residues include K35 and R38. Residue H40 is the Proton acceptor of the active site. Cystine bridges form between C54/C112, C68/C123, C86/C138, and C93/C100. The N-linked (GlcNAc...) asparagine glycan is linked to N62. 69–73 (KPVNT) provides a ligand contact to substrate. N-linked (GlcNAc...) asparagine glycosylation occurs at N90. Positions 94 and 113 each coordinate substrate. Residue N116 is glycosylated (N-linked (GlcNAc...) asparagine). The Proton donor role is filled by H147.

The protein belongs to the pancreatic ribonuclease family. As to quaternary structure, monomer. Interacts with and forms tight 1:1 complexes with RNH1. Dimerization of two such complexes may occur. Interaction with RNH1 inhibits this protein.

The protein resides in the secreted. It catalyses the reaction an [RNA] containing cytidine + H2O = an [RNA]-3'-cytidine-3'-phosphate + a 5'-hydroxy-ribonucleotide-3'-[RNA].. It carries out the reaction an [RNA] containing uridine + H2O = an [RNA]-3'-uridine-3'-phosphate + a 5'-hydroxy-ribonucleotide-3'-[RNA].. Functionally, endonuclease that catalyzes the cleavage of RNA on the 3' side of pyrimidine nucleotides. Acts on single-stranded and double-stranded RNA. The sequence is that of Ribonuclease pancreatic (RNASE1) from Ateles geoffroyi (Black-handed spider monkey).